The sequence spans 591 residues: Adenine deaminase (591 aa).

It belongs to the metallo-dependent hydrolases superfamily. Adenine deaminase family. In terms of assembly, homodimer. The cofactor is Mn(2+).

It catalyses the reaction adenine + H2O + H(+) = hypoxanthine + NH4(+). This chain is Adenine deaminase, found in Edwardsiella ictaluri (strain 93-146).